Reading from the N-terminus, the 677-residue chain is Probable potassium transport system protein Kup (677 aa).

12 helical membrane passes run 13 to 33, 54 to 74, 98 to 118, 137 to 157, 171 to 191, 217 to 237, 249 to 269, 296 to 316, 345 to 365, 374 to 394, 402 to 422, and 429 to 449; these read GALIAIGIVFGDIGTSPLYTM, VSLVFWTLMLITTIKYVIIAL, WLLLPALIGGAALLADGTLTP, FIFPNNQTIVLFVVTVILLIV, IFGPVMLTWFLFIGFFGLVNI, TGIFILGSVFLATTGAEALYS, VSWIFVYTMLILNYMGQGAWI, IFGVVMAALAAIIASQALISG, MYIGTVNWLLCIIGLIIVWAF, AYGLSITITMLMTTLLLYQFI, ILAFFFVVIFGMIETVFLIAS, and GGYATLIIMVAILSVMMIWFY.

The protein belongs to the HAK/KUP transporter (TC 2.A.72) family.

It localises to the cell membrane. It catalyses the reaction K(+)(in) + H(+)(in) = K(+)(out) + H(+)(out). Transport of potassium into the cell. Likely operates as a K(+):H(+) symporter. This Leuconostoc mesenteroides subsp. mesenteroides (strain ATCC 8293 / DSM 20343 / BCRC 11652 / CCM 1803 / JCM 6124 / NCDO 523 / NBRC 100496 / NCIMB 8023 / NCTC 12954 / NRRL B-1118 / 37Y) protein is Probable potassium transport system protein Kup.